Consider the following 356-residue polypeptide: Pyruvate dehydrogenase E1 component subunit beta, mitochondrial (356 aa).

Residues 1–25 (MLSSILKKIQPSLLVNFRIITRTYA) constitute a mitochondrion transit peptide. Thiamine diphosphate is bound at residue E85. Positions 138, 186, 187, 189, and 191 each coordinate K(+).

As to quaternary structure, tetramer of 2 alpha and 2 beta subunits. Requires thiamine diphosphate as cofactor.

The protein localises to the mitochondrion matrix. The catalysed reaction is N(6)-[(R)-lipoyl]-L-lysyl-[protein] + pyruvate + H(+) = N(6)-[(R)-S(8)-acetyldihydrolipoyl]-L-lysyl-[protein] + CO2. The pyruvate dehydrogenase complex catalyzes the overall conversion of pyruvate to acetyl-CoA and CO(2). It contains multiple copies of three enzymatic components: pyruvate dehydrogenase (E1), dihydrolipoamide acetyltransferase (E2) and lipoamide dehydrogenase (E3). This Dictyostelium discoideum (Social amoeba) protein is Pyruvate dehydrogenase E1 component subunit beta, mitochondrial (pdhB).